The sequence spans 232 residues: Lipopolysaccharide core heptose(II) kinase WaaY (232 aa).

This sequence belongs to the protein kinase superfamily. RfaY/WaaY family.

It carries out the reaction alpha-D-Glc-(1-&gt;3)-[L-alpha-D-Hep-(1-&gt;7)]-L-alpha-D-Hep-(1-&gt;3)-4-O-PO3(2-)-L-alpha-D-Hep-(1-&gt;5)-[alpha-Kdo-(2-&gt;4)]-alpha-Kdo-(2-&gt;6)-lipid A + ATP = alpha-D-Glc-(1-&gt;3)-[L-alpha-D-Hep-(1-&gt;7)]-4-O-PO3(2-)-L-alpha-D-Hep-(1-&gt;3)-4-O-PO3(2-)-L-alpha-D-Hep-(1-&gt;5)-[alpha-Kdo-(2-&gt;4)]-alpha-Kdo-(2-&gt;6)-lipid A + ADP + H(+). Its pathway is bacterial outer membrane biogenesis; LPS core biosynthesis. Kinase involved in the biosynthesis of the core oligosaccharide region of lipopolysaccharide (LPS). Catalyzes the phosphorylation of the second heptose unit (HepII) of the inner core. This Salmonella typhimurium (strain LT2 / SGSC1412 / ATCC 700720) protein is Lipopolysaccharide core heptose(II) kinase WaaY.